A 248-amino-acid chain; its full sequence is 14-3-3-like protein G-BOX factor 14 kappa (248 aa).

3 positions are modified to phosphoserine: S70, S112, and S193. A Phosphothreonine modification is found at T214.

The protein belongs to the 14-3-3 family. Interacts with the isocitrate dehydrogenase IDH3, and malate dehydrogenases MDH1 and MDH2. Interacts with CINV1.

Its subcellular location is the nucleus. It localises to the cytoplasm. Functionally, is associated with a DNA binding complex that binds to the G box, a well-characterized cis-acting DNA regulatory element found in plant genes. Involved in the regulation of nutrient metabolism. Negative regulator of freezing tolerance that modulates cold-responsive C-repeat-binding factors (CBF) DREB1A AND DREB1B proteins stability by facilitating their ubiquitin-mediated degradation; this processus is counteracted by B1L. This is 14-3-3-like protein G-BOX factor 14 kappa from Arabidopsis thaliana (Mouse-ear cress).